Consider the following 587-residue polypeptide: uncharacterized protein (587 aa).

Residues 61–426 (GKGASKKAAL…DLPNWHHDAE (366 aa)) enclose the YcaO domain.

This is an uncharacterized protein from Haemophilus influenzae (strain ATCC 51907 / DSM 11121 / KW20 / Rd).